The primary structure comprises 33 residues: Large ribosomal subunit protein uL24 (33 aa).

The protein belongs to the universal ribosomal protein uL24 family. In terms of assembly, component of the large ribosomal subunit.

The protein resides in the cytoplasm. Component of the large ribosomal subunit. The ribosome is a large ribonucleoprotein complex responsible for the synthesis of proteins in the cell. The protein is Large ribosomal subunit protein uL24 (rpl26) of Xenopus laevis (African clawed frog).